The sequence spans 1020 residues: Protein CLASP-2 (1020 aa).

Low complexity predominate over residues 259 to 271; the sequence is ASDAASSSTSINS. 3 disordered regions span residues 259 to 280, 329 to 387, and 419 to 461; these read ASDA…PFRS, PMTT…RPSA, and LQKA…ALDT. A compositionally biased stretch (polar residues) spans 329–343; that stretch reads PMTTRTLSKIDTSPG. Positions 372–381 are enriched in low complexity; it reads SQPGSRNGSP. Over residues 450-460 the composition is skewed to polar residues; it reads QKATPQKSALD. An HEAT repeat occupies 954 to 992; sequence LAPCVIKSYDSPSSAVRKTAVYCLVAMVNKLGMKTMEPH.

This sequence belongs to the CLASP family. Interacts with hcp-1 and hcp-2.

The protein localises to the cytoplasm. It localises to the cytoskeleton. Its subcellular location is the microtubule organizing center. It is found in the centrosome. The protein resides in the chromosome. The protein localises to the centromere. It localises to the kinetochore. Its subcellular location is the spindle. Functionally, probable microtubule plus-end tracking protein that promotes the stabilization of dynamic microtubules. Required for the formation of mitotic and meiotic spindles. Specifically promotes the polymerization of kinetochore-bound microtubules. Also required for cytoplasmic streaming. Essential for embryonic development. This chain is Protein CLASP-2 (cls-2), found in Caenorhabditis elegans.